The following is a 305-amino-acid chain: UDP-3-O-acyl-N-acetylglucosamine deacetylase (305 aa).

Zn(2+)-binding residues include histidine 79, histidine 238, and aspartate 242. Catalysis depends on histidine 265, which acts as the Proton donor.

The protein belongs to the LpxC family. It depends on Zn(2+) as a cofactor.

The catalysed reaction is a UDP-3-O-[(3R)-3-hydroxyacyl]-N-acetyl-alpha-D-glucosamine + H2O = a UDP-3-O-[(3R)-3-hydroxyacyl]-alpha-D-glucosamine + acetate. It functions in the pathway glycolipid biosynthesis; lipid IV(A) biosynthesis; lipid IV(A) from (3R)-3-hydroxytetradecanoyl-[acyl-carrier-protein] and UDP-N-acetyl-alpha-D-glucosamine: step 2/6. Functionally, catalyzes the hydrolysis of UDP-3-O-myristoyl-N-acetylglucosamine to form UDP-3-O-myristoylglucosamine and acetate, the committed step in lipid A biosynthesis. The chain is UDP-3-O-acyl-N-acetylglucosamine deacetylase from Shigella boydii serotype 18 (strain CDC 3083-94 / BS512).